Reading from the N-terminus, the 321-residue chain is Serine/threonine-protein phosphatase PP1 isozyme 4 (321 aa).

Position 2 is an N-acetylalanine (alanine 2). 4 residues coordinate Mn(2+): aspartate 74, histidine 76, aspartate 102, and asparagine 134. Histidine 135 functions as the Proton donor in the catalytic mechanism. Positions 183 and 258 each coordinate Mn(2+).

Belongs to the PPP phosphatase family. PP-1 subfamily. As to quaternary structure, interacts with the DELLA proteins RGA and GAI. Interacts with PIF3 and PIF5. Interacts with the auxin efflux carrier PIN1. Mn(2+) serves as cofactor. In terms of tissue distribution, expressed in the vasculature of roots and cotyledons, tips of leaves, guard cells, bases of trichomes, pistils and stamen filaments.

The protein resides in the nucleus. Its subcellular location is the cytoplasm. It carries out the reaction O-phospho-L-seryl-[protein] + H2O = L-seryl-[protein] + phosphate. It catalyses the reaction O-phospho-L-threonyl-[protein] + H2O = L-threonyl-[protein] + phosphate. Phosphatase activity is strongly reduced by the protein phosphatase inhibitor 2 (I-2). In terms of biological role, serine/threonine-protein phosphatase that possesses phosphatase activity toward para-nitrophenyl phosphate (pNPP) in vitro. Acts as a positive regulator in the gibberellin (GA) signaling pathway to regulate plant growth and development. Promotes the GA-induced and proteasomal-dependent degradation of the DELLA proteins RGA and GAI by directly binding and dephosphorylating these proteins. Involved in the regulation of phytochrome B (phyB) signaling pathway that controls photomorphogenesis. Promotes the proteasomal-dependent degradation of PIF5 factor by directly binding and dephosphorylating this protein. Involved in the regulation of pavement cell (PC) interdigitation by modulating the auxin efflux carrier PIN1 polarity and endocytic trafficking. Regulates PIN1 polar targeting through direct binding and dephosphorylation. Acts antagonistically with PID in regulating PC development. The polypeptide is Serine/threonine-protein phosphatase PP1 isozyme 4 (Arabidopsis thaliana (Mouse-ear cress)).